The chain runs to 668 residues: Probable potassium transport system protein Kup (668 aa).

12 helical membrane passes run 17-37 (GILV…LYVM), 59-79 (VSLI…VIAL), 104-124 (IIPA…TPAV), 148-168 (TIIV…QRFG), 175-195 (AFGP…LMNF), 221-241 (LGLF…ALYS), 256-276 (PYIK…LLTV), 299-319 (ILVF…QALI), 350-370 (MYIP…VLAF), 380-400 (YGLS…FYLL), 403-423 (IPAW…VVFF), and 430-450 (FFHG…IMII).

This sequence belongs to the HAK/KUP transporter (TC 2.A.72) family.

It is found in the cell membrane. The catalysed reaction is K(+)(in) + H(+)(in) = K(+)(out) + H(+)(out). In terms of biological role, transport of potassium into the cell. Likely operates as a K(+):H(+) symporter. This Enterococcus faecalis (strain ATCC 700802 / V583) protein is Probable potassium transport system protein Kup.